The sequence spans 474 residues: tRNA-2-methylthio-N(6)-dimethylallyladenosine synthase (474 aa).

Positions 3-120 (KKLHIKTWGC…LPEMINSVRG (118 aa)) constitute an MTTase N-terminal domain. Residues Cys-12, Cys-49, Cys-83, Cys-157, Cys-161, and Cys-164 each coordinate [4Fe-4S] cluster. The Radical SAM core domain maps to 143-375 (RAEGPTAFVS…QERINQQAMA (233 aa)). A TRAM domain is found at 378-441 (RRMLGTTQRI…PNSLRGKVVR (64 aa)).

Belongs to the methylthiotransferase family. MiaB subfamily. In terms of assembly, monomer. Requires [4Fe-4S] cluster as cofactor.

It localises to the cytoplasm. It carries out the reaction N(6)-dimethylallyladenosine(37) in tRNA + (sulfur carrier)-SH + AH2 + 2 S-adenosyl-L-methionine = 2-methylsulfanyl-N(6)-dimethylallyladenosine(37) in tRNA + (sulfur carrier)-H + 5'-deoxyadenosine + L-methionine + A + S-adenosyl-L-homocysteine + 2 H(+). Functionally, catalyzes the methylthiolation of N6-(dimethylallyl)adenosine (i(6)A), leading to the formation of 2-methylthio-N6-(dimethylallyl)adenosine (ms(2)i(6)A) at position 37 in tRNAs that read codons beginning with uridine. In Salmonella paratyphi A (strain ATCC 9150 / SARB42), this protein is tRNA-2-methylthio-N(6)-dimethylallyladenosine synthase.